A 60-amino-acid chain; its full sequence is MNFSKVFALVLLIGLVLLTGHTEAGGLKKLGKKLEGVGKRVFKASEKALPVVTGYKAIGK.

The first 24 residues, 1-24 (MNFSKVFALVLLIGLVLLTGHTEA), serve as a signal peptide directing secretion.

This sequence belongs to the cecropin family.

The protein resides in the secreted. Functionally, putative antimicrobial peptide. Partially neutralizes lipopolysaccharides (LPS). Exhibits anti-inflammatory properties: inhibits LPS-induced iNOS/NOS2 transcription, nitric oxide (NO) and pro-inflammatory cytokine production in mouse macrophages and human peripheral blood mononuclear cells (PBMCs); inhibits LPS-induced activation of MAPK and NF-kappa-B signaling pathways in mouse macrophages. The protein is Cecropin-B1 of Aedes aegypti (Yellowfever mosquito).